The following is a 101-amino-acid chain: Protein S100-A4 (101 aa).

N-acetylalanine is present on Ala2. Lys7 is modified (N6-acetyllysine). 2 consecutive EF-hand domains span residues 12 to 47 (MVST…SFLG) and 50 to 85 (TDEA…IAMM). Ca(2+) contacts are provided by Lys28 and Glu33. The residue at position 35 (Lys35) is an N6-acetyllysine. Residues Asp63, Asn65, Asp67, Glu69, and Glu74 each coordinate Ca(2+).

This sequence belongs to the S-100 family. In terms of assembly, homodimer. Interacts with PPFIBP1 in a calcium-dependent mode. Interacts with PGLYRP1; this complex acts as a chemoattractant that promotes lymphocyte movement. Interacts with MYH9; this interaction increases cell motility. Interacts with Annexin 2/ANXA2. Interacts with TP53; this interaction promotes TP53 degradation. Interacts with CCR5. Interacts with FCGR3A; this interaction inhibits PKC-dependent phosphorylation of FCGR3A. As to expression, ubiquitously expressed.

It is found in the secreted. It localises to the nucleus. The protein localises to the cytoplasm. Functionally, calcium-binding protein that plays a role in various cellular processes including motility, angiogenesis, cell differentiation, apoptosis, and autophagy. Increases cell motility and invasiveness by interacting with non-muscle myosin heavy chain (NMMHC) IIA/MYH9. Mechanistically, promotes filament depolymerization and increases the amount of soluble myosin-IIA, resulting in the formation of stable protrusions facilitating chemotaxis. Also modulates the pro-apoptotic function of TP53 by binding to its C-terminal transactivation domain within the nucleus and reducing its protein levels. Within the extracellular space, stimulates cytokine production including granulocyte colony-stimulating factor and CCL24 from T-lymphocytes. In addition, stimulates T-lymphocyte chemotaxis by acting as a chemoattractant complex with PGLYRP1 that promotes lymphocyte migration via CCR5 and CXCR3 receptors. In Homo sapiens (Human), this protein is Protein S100-A4 (S100A4).